We begin with the raw amino-acid sequence, 807 residues long: MKARRNKKQVPSFRKLIKTSKVKLENKLKNKQFKQQSTIKKYRKEQRKLRQAVKDAVSKKPIPLEDPKSKRPVKRMEREEDEEEEALPLDMMDEDDLQLMKDLGQKASFLTRDLSSSEPVHIKKRKHESVIEKYEKVPRTLQTAPEKELIHLLPIKDKSGIIPQAREKPVTDVQQEEEAEEELEDEEEVIEDPRKELTIEEHVIERKKKLQDKKIQIAALASAILSDPESHIKKLKELRSMLMEQDPDVAVTVRKLVIISLMELFKDITPSYKIRPLTEAEKSTKIRKETQKLREFEEGLVSQYKFYLENLEQIVKDWKQRKLKKSNVVSLKAYKGLAEVAVKSLCELLVALPHFNFHNNIIVLIVPLMNDGSKPVSEMCCEAVKKLFKQDKLGQASLGVIKVISGFVKGRNYEVRPEMLKTFLCLRIKEVEVKKDTEDINKPKRFMTFKEKRKTLSRMQRKWKKAEEKLERELREAEASESTEKKLKLHTETLNIVFVTYFRILKKAQKSPLLPAVLEGLAKFAHLINVEFFDDLLVVLHTLIESGELSYQESLHCVQTAFHILSGQGDVLNIDPMKFYTHLYKTLFTLHAGATNDGIEIVLHCLDVMLSKRRKQVSHQRALAFIKRLCTLALQVLPNSSIGLLATTRILMHTFPRTDLLLDNESQGSGVFLPELEEPEYCNAQNTALWELHTLRRHYHPIVRRFAAHLLAGAPSEGSEALKPELSRRSAVELFETYSMAAMTFNPPVESSHSKRKDKFLPGDSFLNEDLNQLIKRYCNEAAPETPLDFAKCLESSSRQYRVNGLS.

2 disordered regions span residues 27 to 93 and 167 to 191; these read KLKN…DMMD and EKPV…EVIE. The segment covering 40 to 51 has biased composition (basic residues); the sequence is KKYRKEQRKLRQ. Over residues 52–78 the composition is skewed to basic and acidic residues; the sequence is AVKDAVSKKPIPLEDPKSKRPVKRMER. 2 stretches are compositionally biased toward acidic residues: residues 79–93 and 174–190; these read EEDE…DMMD and QQEE…EEVI. Residue K332 forms a Glycyl lysine isopeptide (Lys-Gly) (interchain with G-Cter in SUMO2) linkage. Positions 449-489 form a coiled coil; it reads FKEKRKTLSRMQRKWKKAEEKLERELREAEASESTEKKLKL.

This sequence belongs to the CBF/MAK21 family.

The protein localises to the nucleus. The protein resides in the nucleolus. Its subcellular location is the nucleus speckle. Its function is as follows. May be required for adipogenesis. In Mus musculus (Mouse), this protein is Nucleolar complex protein 3 homolog (Noc3l).